Reading from the N-terminus, the 516-residue chain is BAR/IMD domain-containing adapter protein 2-like 1 (516 aa).

An IMD domain is found at 1 to 249; sequence MSRGPEEVNR…MNMIEEIKTP (249 aa). The stretch at 115 to 148 forms a coiled coil; it reads MNATLKRYQAEHRNKLDSLEKSQAELKKIRRKSQ. Residues threonine 248 and threonine 257 each carry the phosphothreonine modification. Phosphoserine occurs at positions 261 and 281. A disordered region spans residues 303–328; that stretch reads NPATAGQSAEKTNNSTANTGDDPSLQ. Serine 332 bears the Phosphoserine mark. The SH3 domain occupies 340–403; the sequence is MKKQKVKTIF…PSSYTKLLEE (64 aa). The residue at position 413 (threonine 413) is a Phosphothreonine. Serine 415, serine 421, and serine 423 each carry phosphoserine. Residues 454 to 516 are disordered; that stretch reads ADAAKIPSTS…TNDRSAPIIR (63 aa). A compositionally biased stretch (polar residues) spans 474–485; that stretch reads ATSTSPSDSNGT. The interval 488-516 is binds F-actin; it reads PPFLSGENPFATVKLRPTVTNDRSAPIIR.

As to quaternary structure, interacts with RAC1. Binds to F-actin. Interacts with FASLG. Post-translationally, phosphorylated on tyrosine in response to insulin.

It localises to the cytoplasm. Its subcellular location is the cytoskeleton. Its function is as follows. May function as adapter protein. Involved in the formation of clusters of actin bundles. Plays a role in the reorganization of the actin cytoskeleton in response to bacterial infection. The protein is BAR/IMD domain-containing adapter protein 2-like 1 (Baiap2l1) of Rattus norvegicus (Rat).